Reading from the N-terminus, the 229-residue chain is Flagellar L-ring protein (229 aa).

Positions 1-25 (MKQVRLLPPAPVRAVCALAVAALAG) are cleaved as a signal peptide. Residue cysteine 26 is the site of N-palmitoyl cysteine attachment. The S-diacylglycerol cysteine moiety is linked to residue cysteine 26.

This sequence belongs to the FlgH family. The basal body constitutes a major portion of the flagellar organelle and consists of four rings (L,P,S, and M) mounted on a central rod.

Its subcellular location is the cell outer membrane. The protein resides in the bacterial flagellum basal body. In terms of biological role, assembles around the rod to form the L-ring and probably protects the motor/basal body from shearing forces during rotation. The polypeptide is Flagellar L-ring protein (Burkholderia ambifaria (strain ATCC BAA-244 / DSM 16087 / CCUG 44356 / LMG 19182 / AMMD) (Burkholderia cepacia (strain AMMD))).